A 415-amino-acid polypeptide reads, in one-letter code: Dynein assembly factor with WD repeat domains 1 (415 aa).

WD repeat units follow at residues 90 to 129 (AHIL…ELNT), 132 to 174 (GHRN…HTFR), 175 to 214 (GHTA…EVYT), 217 to 256 (GHSA…KVNI), 259 to 298 (GHCA…CVAT), 301 to 340 (GHDD…CIAK), 343 to 384 (GHEG…QVLE), and 386 to 415 (HTDE…RIWR).

This sequence belongs to the WD repeat WDR69 family. Interacts with IFT46.

It is found in the cytoplasm. It localises to the cytoskeleton. The protein localises to the flagellum basal body. The protein resides in the flagellum axoneme. In terms of biological role, required for axonemal dynein assembly and ciliary motility in ciliated organs, including Kupffer's vesicle, during embryogenesis. Facilitates the onset of robust cilia motility during development. The polypeptide is Dynein assembly factor with WD repeat domains 1 (Homo sapiens (Human)).